The primary structure comprises 416 residues: Glutamyl-tRNA reductase (416 aa).

Residues 49-52 (TCNR), serine 105, 110-112 (EPQ), and glutamine 116 each bind substrate. Cysteine 50 (nucleophile) is an active-site residue. 185-190 (GAGETI) contacts NADP(+).

It belongs to the glutamyl-tRNA reductase family. As to quaternary structure, homodimer.

The catalysed reaction is (S)-4-amino-5-oxopentanoate + tRNA(Glu) + NADP(+) = L-glutamyl-tRNA(Glu) + NADPH + H(+). Its pathway is porphyrin-containing compound metabolism; protoporphyrin-IX biosynthesis; 5-aminolevulinate from L-glutamyl-tRNA(Glu): step 1/2. Catalyzes the NADPH-dependent reduction of glutamyl-tRNA(Glu) to glutamate 1-semialdehyde (GSA). The polypeptide is Glutamyl-tRNA reductase (Shewanella denitrificans (strain OS217 / ATCC BAA-1090 / DSM 15013)).